The following is a 272-amino-acid chain: MPLSTSLLGKKSTYKDSYDATLLFKIPRINNRNVLGINNNLPFYGVDIWNTYEISCLNKNGKPLVGIGTFYIPADSENIVESKSFKLYLNSFNNFIVKSIEELEQIILQDLSNVTCAKVTGRIFPINTKIEFGIPSGKNIDNLDIVCNNYGPPDNSLIEYEDVLVEEEIHSNLLKSNCLVTGQPDWGTIVIKYKGKKLKYDSFLRYLISFRNCNEFAEQCAERIFIDIKNAINLDFLSIYIVYTRRGGIDICPYRSTDKSYALPSNKRFIRQ.

80-82 (VES) is a substrate binding site. 82–83 (SK) is a binding site for NADPH. The Thioimide intermediate role is filled by cysteine 178. Aspartate 185 acts as the Proton donor in catalysis. 217 to 218 (AE) provides a ligand contact to substrate. An NADPH-binding site is contributed by 246 to 247 (RG).

The protein belongs to the GTP cyclohydrolase I family. QueF type 2 subfamily. In terms of assembly, homodimer.

Its subcellular location is the cytoplasm. It carries out the reaction 7-aminomethyl-7-carbaguanine + 2 NADP(+) = 7-cyano-7-deazaguanine + 2 NADPH + 3 H(+). It participates in tRNA modification; tRNA-queuosine biosynthesis. Catalyzes the NADPH-dependent reduction of 7-cyano-7-deazaguanine (preQ0) to 7-aminomethyl-7-deazaguanine (preQ1). The polypeptide is NADPH-dependent 7-cyano-7-deazaguanine reductase (Rickettsia typhi (strain ATCC VR-144 / Wilmington)).